Reading from the N-terminus, the 308-residue chain is Elongation factor Ts (308 aa).

Positions 80-83 (TDFV) are involved in Mg(2+) ion dislocation from EF-Tu.

The protein belongs to the EF-Ts family.

The protein localises to the cytoplasm. Associates with the EF-Tu.GDP complex and induces the exchange of GDP to GTP. It remains bound to the aminoacyl-tRNA.EF-Tu.GTP complex up to the GTP hydrolysis stage on the ribosome. This chain is Elongation factor Ts, found in Erythrobacter litoralis (strain HTCC2594).